Here is a 407-residue protein sequence, read N- to C-terminus: Probable endo-beta-1,4-glucanase celB (407 aa).

A signal peptide spans 1–18 (MAQTLAAASLVLVPLVTA). A glycan (N-linked (GlcNAc...) asparagine) is linked at asparagine 136. Glutamate 216 serves as the catalytic Nucleophile. The Proton donor role is filled by glutamate 221.

This sequence belongs to the glycosyl hydrolase 7 (cellulase C) family.

It is found in the secreted. It carries out the reaction Endohydrolysis of (1-&gt;4)-beta-D-glucosidic linkages in cellulose, lichenin and cereal beta-D-glucans.. Functionally, has endoglucanase activity on substrates containing beta-1,4 glycosidic bonds, like in carboxymethylcellulose (CMC), hydroxyethylcellulose (HEC) and beta-glucan. Involved in the degradation of complex natural cellulosic substrates. This Aspergillus fumigatus (strain ATCC MYA-4609 / CBS 101355 / FGSC A1100 / Af293) (Neosartorya fumigata) protein is Probable endo-beta-1,4-glucanase celB (celB).